The chain runs to 522 residues: Cytochrome P450 monooxygenase AKT7 (522 aa).

The chain crosses the membrane as a helical span at residues 10 to 30 (LYVTCTVLAALILGYIQAMII). Cys452 contacts heme.

It belongs to the cytochrome P450 family. The cofactor is heme.

Its subcellular location is the membrane. It participates in mycotoxin biosynthesis. Functionally, cytochrome P450 monooxygenase; part of the gene clusters that mediate the biosynthesis of the host-selective toxins (HSTs) AK-toxins responsible for Japanese pear black spot disease by the Japanese pear pathotype. AK-toxins are esters of 9,10-epoxy 8-hydroxy 9-methyldecatrienoic acid (EDA). On cellular level, AK-toxins affect plasma membrane of susceptible cells and cause a sudden increase in loss of K(+) after a few minutes of toxin treatment. The acyl-CoA ligase AKT1, the hydrolase AKT2 and enoyl-CoA hydratase AKT3 are all involved in the biosynthesis of the AK-, AF- and ACT-toxin common 9,10-epoxy-8-hydroxy-9-methyl-decatrienoic acid (EDA) structural moiety. Part of the EDA biosynthesis occurs in the peroxisome since these 3 enzymes are localized in peroxisomes. The exact roles of the 3 enzymes, as well as of additional AK-toxin clusters enzymes, including AKT4, AKT6 and AKTS1, have still to be elucidated. The Cytochrome P450 monooxygenase AKT7 on the other side functions to limit production of EDA and AK-toxin, probably via the catalysis of a side reaction of EDA or its precursor. This Alternaria alternata (Alternaria rot fungus) protein is Cytochrome P450 monooxygenase AKT7.